Here is a 434-residue protein sequence, read N- to C-terminus: ATP-sensitive inward rectifier potassium channel 14 (434 aa).

Residues 1-81 (MGLARALRRL…LSDLFTTCVD (81 aa)) are Cytoplasmic-facing. Cys79 carries the S-nitrosocysteine modification. The helical transmembrane segment at 82–108 (VRWRWMCLLFSCSFLASWLLFGLTFWL) threads the bilayer. The Extracellular segment spans residues 109-131 (IASLHGDLAAPPPPAPCFSQVAS). The helical; Pore-forming intramembrane region spans 132–148 (FLAAFLFALETQTSIGY). The Selectivity filter motif lies at 145 to 150 (SIGYGV). The Extracellular portion of the chain corresponds to 149–157 (GVRSVTEEC). A helical transmembrane segment spans residues 158-185 (PAAVAAVVLQCIAGCVLDAFVVGAVMAK). Residues 186 to 434 (MAKPKKRNET…TPTLALTLPP (249 aa)) are Cytoplasmic-facing. Residues 398–434 (QEEDEEEDTKEGTSAETPDRAASPQALTPTLALTLPP) are disordered. Residues 407–416 (KEGTSAETPD) show a composition bias toward basic and acidic residues. The segment covering 418 to 434 (AASPQALTPTLALTLPP) has biased composition (low complexity).

It belongs to the inward rectifier-type potassium channel (TC 1.A.2.1) family. KCNJ14 subfamily. As to expression, expressed predominantly in motoneurons of cranial nerve motor nuclei within the general somatic and special visceral motor cell column.

It localises to the membrane. The enzyme catalyses K(+)(in) = K(+)(out). With respect to regulation, channel activity is regulated by variations of cytosolic pH; channels are activated by alkaline and inhibited by acidic pH values. Inhibited by Ba(2+) and Cs(+) in a voltage-dependent manner; sensitivity to those inhibitors is lower than in other Kir channels. Inward rectifier potassium channels are characterized by a greater tendency to allow potassium to flow into the cell rather than out of it. Their voltage dependence is regulated by the concentration of extracellular potassium; as external potassium is raised, the voltage range of the channel opening shifts to more positive voltages. This chain is ATP-sensitive inward rectifier potassium channel 14 (Kcnj14), found in Rattus norvegicus (Rat).